The sequence spans 361 residues: MLYNLLLPYIHNSHIANLFHYITFRSGLAVLVTLSLSFLIGPRLIKFLQTLQKYGQPIRLDGPESHQAKAGTPTMGGIMIILSSCFSTLLLADLTNKYIWITLFGFVSFSIIGFLDDYAKVTKNNHYGVKGKSKLLLQGIISLIVCILLEYTIDSPSHMLNVPFFKSLSMDLGYLYIFFAIFVIVGASNAVNLTDGLDGLATVPIALTAGSFALISYLVGNLIYSNYLQLTYLPNTGELTIFCASIVGSCLGFLWFNAQPAEVFMGDTGSLSLGGVLGIISVITKHEIVLGIVGGLFVIETISVIMQVYYFKATKGKRIFKMAPLHHHFEKSGWTESKVVIRFWIISLIFVLIGLSSLKLR.

The next 10 membrane-spanning stretches (helical) occupy residues 28 to 48 (LAVL…IKFL), 74 to 94 (TMGG…LADL), 99 to 119 (IWIT…DDYA), 135 to 155 (LLLQ…TIDS), 167 to 187 (SLSM…IVGA), 203 to 223 (VPIA…GNLI), 236 to 256 (TGEL…FLWF), 263 to 283 (VFMG…ISVI), 288 to 308 (IVLG…IMQV), and 338 to 358 (KVVI…LSSL).

Belongs to the glycosyltransferase 4 family. MraY subfamily. Mg(2+) is required as a cofactor.

It localises to the cell inner membrane. The enzyme catalyses UDP-N-acetyl-alpha-D-muramoyl-L-alanyl-gamma-D-glutamyl-meso-2,6-diaminopimeloyl-D-alanyl-D-alanine + di-trans,octa-cis-undecaprenyl phosphate = di-trans,octa-cis-undecaprenyl diphospho-N-acetyl-alpha-D-muramoyl-L-alanyl-D-glutamyl-meso-2,6-diaminopimeloyl-D-alanyl-D-alanine + UMP. Its pathway is cell wall biogenesis; peptidoglycan biosynthesis. Functionally, catalyzes the initial step of the lipid cycle reactions in the biosynthesis of the cell wall peptidoglycan: transfers peptidoglycan precursor phospho-MurNAc-pentapeptide from UDP-MurNAc-pentapeptide onto the lipid carrier undecaprenyl phosphate, yielding undecaprenyl-pyrophosphoryl-MurNAc-pentapeptide, known as lipid I. In Rickettsia bellii (strain OSU 85-389), this protein is Phospho-N-acetylmuramoyl-pentapeptide-transferase.